Consider the following 412-residue polypeptide: NADH-quinone oxidoreductase subunit 4 (412 aa).

Belongs to the complex I 49 kDa subunit family. In terms of assembly, NDH-1 is composed of at least 14 different subunits, Nqo1 to Nqo14. The complex has a L-shaped structure, with the hydrophobic arm (subunits Nqo7, Nqo8, Nqo10 to Nqo14) embedded in the inner membrane and the hydrophilic peripheral arm (subunits Nqo1 to Nqo6, Nqo9) protruding into the bacterial cytoplasm. The hydrophilic domain contains all the redox centers.

It localises to the cell inner membrane. The catalysed reaction is a quinone + NADH + 5 H(+)(in) = a quinol + NAD(+) + 4 H(+)(out). Its function is as follows. NDH-1 shuttles electrons from NADH, via FMN and iron-sulfur (Fe-S) centers, to quinones in the respiratory chain. The immediate electron acceptor for the enzyme in this species is believed to be ubiquinone. Couples the redox reaction to proton translocation (for every two electrons transferred, four hydrogen ions are translocated across the cytoplasmic membrane), and thus conserves the redox energy in a proton gradient. The chain is NADH-quinone oxidoreductase subunit 4 (nqo4) from Paracoccus denitrificans.